Consider the following 118-residue polypeptide: Large ribosomal subunit protein bL20 (118 aa).

The protein belongs to the bacterial ribosomal protein bL20 family.

Binds directly to 23S ribosomal RNA and is necessary for the in vitro assembly process of the 50S ribosomal subunit. It is not involved in the protein synthesizing functions of that subunit. The sequence is that of Large ribosomal subunit protein bL20 from Desulforamulus reducens (strain ATCC BAA-1160 / DSM 100696 / MI-1) (Desulfotomaculum reducens).